We begin with the raw amino-acid sequence, 256 residues long: Alcohol dehydrogenase (256 aa).

12–35 is an NAD(+) binding site; the sequence is FVAGLGGIGLDTSKELVKRDLKNL. Serine 140 lines the substrate pocket. The active-site Proton acceptor is the tyrosine 153.

It belongs to the short-chain dehydrogenases/reductases (SDR) family. In terms of assembly, homodimer.

The catalysed reaction is a primary alcohol + NAD(+) = an aldehyde + NADH + H(+). The enzyme catalyses a secondary alcohol + NAD(+) = a ketone + NADH + H(+). The sequence is that of Alcohol dehydrogenase (Adh) from Drosophila tsacasi (Fruit fly).